The chain runs to 344 residues: Angiopoietin-related protein 7 (344 aa).

Positions 1 to 26 (MLKKTLSAVAWLCIFLVAFVSHPVWP) are cleaved as a signal peptide. Positions 37-116 (ELTAATCCEE…IGIMQLQAAQ (80 aa)) form a coiled coil. N-linked (GlcNAc...) asparagine glycosylation occurs at N56. Residues 120–341 (QTSADAIYDC…RVEMKIRPED (222 aa)) form the Fibrinogen C-terminal domain. C129 and C160 are oxidised to a cystine. Residues N251 and N265 are each glycosylated (N-linked (GlcNAc...) asparagine). Cysteines 283 and 296 form a disulfide.

As to quaternary structure, homotetramer; disulfide-linked.

The protein localises to the secreted. Functionally, has a role in the formation and organization of the extracellular matrix. In the eye, it functions as a mediator of dexamethasone-induced matrix deposition in the trabecular meshwork, the tissue responsible for the outflow of the ocular aqueous humor and for the maintenance of intraocular pressure. Is a negative regulator of angiogenesis in the cornea, and plays a major role in maintaining corneal avascularity and transparency. This chain is Angiopoietin-related protein 7 (ANGPTL7), found in Bos taurus (Bovine).